Here is a 554-residue protein sequence, read N- to C-terminus: Chaperonin GroEL (554 aa).

Residues 30-33 (TLGP), lysine 51, 87-91 (DGTTT), glycine 415, 478-480 (DAA), and aspartate 494 contribute to the ATP site.

The protein belongs to the chaperonin (HSP60) family. Forms a cylinder of 14 subunits composed of two heptameric rings stacked back-to-back. Interacts with the co-chaperonin GroES.

The protein localises to the cytoplasm. It catalyses the reaction ATP + H2O + a folded polypeptide = ADP + phosphate + an unfolded polypeptide.. Its function is as follows. Together with its co-chaperonin GroES, plays an essential role in assisting protein folding. The GroEL-GroES system forms a nano-cage that allows encapsulation of the non-native substrate proteins and provides a physical environment optimized to promote and accelerate protein folding. This Pelobacter propionicus (strain DSM 2379 / NBRC 103807 / OttBd1) protein is Chaperonin GroEL.